Here is a 182-residue protein sequence, read N- to C-terminus: Isopentenyl-diphosphate Delta-isomerase (182 aa).

Mn(2+)-binding residues include His25 and His32. The region spanning 30–164 is the Nudix hydrolase domain; that stretch reads LLHLAFSSWL…PWAFSPWMVM (135 aa). Cys67 is a catalytic residue. His69 is a Mn(2+) binding site. Glu87 contacts Mg(2+). Glu114 and Glu116 together coordinate Mn(2+). Glu116 is an active-site residue.

The protein belongs to the IPP isomerase type 1 family. In terms of assembly, homodimer. It depends on Mg(2+) as a cofactor. Requires Mn(2+) as cofactor.

It localises to the cytoplasm. The catalysed reaction is isopentenyl diphosphate = dimethylallyl diphosphate. It participates in isoprenoid biosynthesis; dimethylallyl diphosphate biosynthesis; dimethylallyl diphosphate from isopentenyl diphosphate: step 1/1. In terms of biological role, catalyzes the 1,3-allylic rearrangement of the homoallylic substrate isopentenyl (IPP) to its highly electrophilic allylic isomer, dimethylallyl diphosphate (DMAPP). The polypeptide is Isopentenyl-diphosphate Delta-isomerase (Shigella boydii serotype 18 (strain CDC 3083-94 / BS512)).